Consider the following 728-residue polypeptide: Rho-related BTB domain-containing protein 2 (728 aa).

Residues 1–210 (MDSDMDYERP…DNAIRAALIS (210 aa)) form a rho-like region. GTP contacts are provided by residues 21–28 (GDNAVGKT), 84–88 (DTFGD), and 140–143 (CQLD). BTB domains follow at residues 266 to 333 (ADVI…HHHH) and 500 to 567 (SDVT…TSSP). The span at 304–313 (ELGGPSGSGG) shows a compositional bias: gly residues. Residues 304-333 (ELGGPSGSGGPRPEDHRSHPEQHHHHHHHH) form a disordered region. Over residues 315–324 (RPEDHRSHPE) the composition is skewed to basic and acidic residues. A disordered region spans residues 703–728 (FWNSPSSPSSSAAGSASPSSSSSAVV). Residues 706 to 728 (SPSSPSSSAAGSASPSSSSSAVV) are compositionally biased toward low complexity.

Belongs to the small GTPase superfamily. Rho family. In terms of assembly, interacts with HSP90AA1 and HSP90AB1. Forms a complex with CUL3 and RBX1. Interacts (via BTB 1 domain) with CUL3. Interacts with MSI2. Post-translationally, autoubiquitinated by RHOBTB2-CUL3-RBX1 ubiquitin ligase complex. In terms of tissue distribution, expressed in most tissues, with highest expression in brain.

Its function is as follows. Regulator of cell proliferation and apoptosis. It likely functions as a substrate-adapter that recruits key substrates, e.g. MSI2, to CUL3-based ubiquitin ligase complexes for degradation. Required for MSI2 ubiquitination and degradation. The protein is Rho-related BTB domain-containing protein 2 (Rhobtb2) of Mus musculus (Mouse).